The primary structure comprises 207 residues: Metalloproteinase inhibitor 1 (207 aa).

Positions 1–23 (MAPLAALASSMLLLLWLVAPSRA) are cleaved as a signal peptide. Residue Cys24 coordinates Zn(2+). Residues 24–27 (CTCV) are involved in metalloproteinase-binding. Disulfide bonds link Cys24/Cys93, Cys26/Cys122, Cys36/Cys147, Cys150/Cys197, Cys155/Cys160, and Cys168/Cys189. The 124-residue stretch at 24–147 (CTCVPPHPQT…GFTKTYAAGC (124 aa)) folds into the NTR domain. Residue Asn53 is glycosylated (N-linked (GlcNAc...) asparagine). Positions 90 to 91 (ES) are involved in metalloproteinase-binding. Asn101 carries an N-linked (GlcNAc...) asparagine glycan. Residue Ser178 is modified to Phosphoserine.

The protein belongs to the protease inhibitor I35 (TIMP) family. As to quaternary structure, interacts with MMP1, MMP3, MMP10 and MMP13, but has only very low affinity for MMP14. Interacts with CD63; identified in a complex with CD63 and ITGB1. Post-translationally, the activity of TIMP1 is dependent on the presence of disulfide bonds. N-glycosylated.

The protein localises to the secreted. Its function is as follows. Metalloproteinase inhibitor that functions by forming one to one complexes with target metalloproteinases, such as collagenases, and irreversibly inactivates them by binding to their catalytic zinc cofactor. Acts on MMP1, MMP2, MMP3, MMP7, MMP8, MMP9, MMP10, MMP11, MMP12, MMP13 and MMP16. Does not act on MMP14. Also functions as a growth factor that regulates cell differentiation, migration and cell death and activates cellular signaling cascades via CD63 and ITGB1. Plays a role in integrin signaling. This Oryctolagus cuniculus (Rabbit) protein is Metalloproteinase inhibitor 1 (TIMP1).